The following is a 288-amino-acid chain: UDP-3-O-acyl-N-acetylglucosamine deacetylase (288 aa).

Residues His79, His236, and Asp240 each contribute to the Zn(2+) site. The active-site Proton donor is His263.

Belongs to the LpxC family. It depends on Zn(2+) as a cofactor.

The catalysed reaction is a UDP-3-O-[(3R)-3-hydroxyacyl]-N-acetyl-alpha-D-glucosamine + H2O = a UDP-3-O-[(3R)-3-hydroxyacyl]-alpha-D-glucosamine + acetate. Its pathway is glycolipid biosynthesis; lipid IV(A) biosynthesis; lipid IV(A) from (3R)-3-hydroxytetradecanoyl-[acyl-carrier-protein] and UDP-N-acetyl-alpha-D-glucosamine: step 2/6. Functionally, catalyzes the hydrolysis of UDP-3-O-myristoyl-N-acetylglucosamine to form UDP-3-O-myristoylglucosamine and acetate, the committed step in lipid A biosynthesis. The polypeptide is UDP-3-O-acyl-N-acetylglucosamine deacetylase (Rickettsia conorii (strain ATCC VR-613 / Malish 7)).